A 319-amino-acid polypeptide reads, in one-letter code: Methionyl-tRNA formyltransferase (319 aa).

112-115 (SLLP) is a binding site for (6S)-5,6,7,8-tetrahydrofolate.

It belongs to the Fmt family.

The catalysed reaction is L-methionyl-tRNA(fMet) + (6R)-10-formyltetrahydrofolate = N-formyl-L-methionyl-tRNA(fMet) + (6S)-5,6,7,8-tetrahydrofolate + H(+). In terms of biological role, attaches a formyl group to the free amino group of methionyl-tRNA(fMet). The formyl group appears to play a dual role in the initiator identity of N-formylmethionyl-tRNA by promoting its recognition by IF2 and preventing the misappropriation of this tRNA by the elongation apparatus. This Pelobacter propionicus (strain DSM 2379 / NBRC 103807 / OttBd1) protein is Methionyl-tRNA formyltransferase.